Reading from the N-terminus, the 139-residue chain is Small ribosomal subunit protein uS19 (139 aa).

This sequence belongs to the universal ribosomal protein uS19 family.

Functionally, protein S19 forms a complex with S13 that binds strongly to the 16S ribosomal RNA. This Ignicoccus hospitalis (strain KIN4/I / DSM 18386 / JCM 14125) protein is Small ribosomal subunit protein uS19.